Reading from the N-terminus, the 432-residue chain is MLDINLLRKDLEGVVARLETRKSPQPFLDVERFTALEAERKAIQTRTEELQARRNSLSKQIGQLKAKGEDTAAVMAEVGGIGDGLKASAERLEVIQSELNALLMALPNLPQAGVPVGADEHANVEVRRWGQPRALDFAPKDHVDLGAPLGLDFETGAKLSGARFSFLRGPVARLHRALAQFMLDVQTQEHGYTECYTPYIVNREVLEGTGQLPKFEADMFWVTRGGDDDEATTQYLISTSEISLTNSVREQVLAADQLPIKLTAHSPCFRSEAGSAGRDTRGMIRQHQFDKVEMVQITTAEQSDAALEAMVGHAEAVLQKLELPYRVITLCTGDMGFGAAKTYDLEVWLPAQNTYREISSCSNCEAFQARRMQTRYKTAQGKNELVHTLNGSGLAVGRALVAVLENGQNADGSITIPAALRPYLGGLERLVA.

239–241 lines the L-serine pocket; it reads TSE. Residue 270 to 272 participates in ATP binding; sequence RSE. Glutamate 293 is a binding site for L-serine. Residue 357–360 coordinates ATP; the sequence is EISS. Serine 392 is an L-serine binding site.

The protein belongs to the class-II aminoacyl-tRNA synthetase family. Type-1 seryl-tRNA synthetase subfamily. In terms of assembly, homodimer. The tRNA molecule binds across the dimer.

Its subcellular location is the cytoplasm. It carries out the reaction tRNA(Ser) + L-serine + ATP = L-seryl-tRNA(Ser) + AMP + diphosphate + H(+). The enzyme catalyses tRNA(Sec) + L-serine + ATP = L-seryl-tRNA(Sec) + AMP + diphosphate + H(+). The protein operates within aminoacyl-tRNA biosynthesis; selenocysteinyl-tRNA(Sec) biosynthesis; L-seryl-tRNA(Sec) from L-serine and tRNA(Sec): step 1/1. In terms of biological role, catalyzes the attachment of serine to tRNA(Ser). Is also able to aminoacylate tRNA(Sec) with serine, to form the misacylated tRNA L-seryl-tRNA(Sec), which will be further converted into selenocysteinyl-tRNA(Sec). This Methylibium petroleiphilum (strain ATCC BAA-1232 / LMG 22953 / PM1) protein is Serine--tRNA ligase.